A 175-amino-acid chain; its full sequence is ATP synthase subunit b, chloroplastic (175 aa).

A helical membrane pass occupies residues 24–46 (VLNLAVVLAIVLTYVGDALRGLL).

Belongs to the ATPase B chain family. F-type ATPases have 2 components, F(1) - the catalytic core - and F(0) - the membrane proton channel. F(1) has five subunits: alpha(3), beta(3), gamma(1), delta(1), epsilon(1). F(0) has four main subunits: a(1), b(1), b'(1) and c(10-14). The alpha and beta chains form an alternating ring which encloses part of the gamma chain. F(1) is attached to F(0) by a central stalk formed by the gamma and epsilon chains, while a peripheral stalk is formed by the delta, b and b' chains.

Its subcellular location is the plastid. It localises to the chloroplast thylakoid membrane. Its function is as follows. F(1)F(0) ATP synthase produces ATP from ADP in the presence of a proton or sodium gradient. F-type ATPases consist of two structural domains, F(1) containing the extramembraneous catalytic core and F(0) containing the membrane proton channel, linked together by a central stalk and a peripheral stalk. During catalysis, ATP synthesis in the catalytic domain of F(1) is coupled via a rotary mechanism of the central stalk subunits to proton translocation. Functionally, component of the F(0) channel, it forms part of the peripheral stalk, linking F(1) to F(0). This chain is ATP synthase subunit b, chloroplastic, found in Chlorella vulgaris (Green alga).